Here is a 443-residue protein sequence, read N- to C-terminus: tRNA modification GTPase MnmE (443 aa).

3 residues coordinate (6S)-5-formyl-5,6,7,8-tetrahydrofolate: Arg23, Glu81, and Lys119. Residues 214-369 (GMRVAILGKP…LLSALKERAI (156 aa)) form the TrmE-type G domain. GTP is bound by residues 224 to 229 (NVGKST), 243 to 249 (SEYPGTT), and 268 to 271 (DTAG). Mg(2+) is bound by residues Ser228 and Thr249. Residue Lys443 coordinates (6S)-5-formyl-5,6,7,8-tetrahydrofolate.

The protein belongs to the TRAFAC class TrmE-Era-EngA-EngB-Septin-like GTPase superfamily. TrmE GTPase family. As to quaternary structure, homodimer. Heterotetramer of two MnmE and two MnmG subunits. Requires K(+) as cofactor.

It localises to the cytoplasm. Its function is as follows. Exhibits a very high intrinsic GTPase hydrolysis rate. Involved in the addition of a carboxymethylaminomethyl (cmnm) group at the wobble position (U34) of certain tRNAs, forming tRNA-cmnm(5)s(2)U34. This is tRNA modification GTPase MnmE from Anaplasma marginale (strain St. Maries).